We begin with the raw amino-acid sequence, 714 residues long: Cell wall protein IFF7 (714 aa).

An N-terminal signal peptide occupies residues 1 to 19 (MLFTLSILSTLLFSTSISA). Residue Asn-200 is glycosylated (N-linked (GlcNAc...) asparagine). Positions 320–330 (GPVPSQKSLPS) are enriched in polar residues. Disordered regions lie at residues 320–633 (GPVP…AADS) and 660–692 (PIAN…ANGS). The segment covering 346-504 (GSSSSSSVVS…SSTPLSGDSS (159 aa)) has biased composition (low complexity). Asn-390, Asn-394, Asn-399, Asn-421, and Asn-473 each carry an N-linked (GlcNAc...) asparagine glycan. Residues 505–519 (QVSSLTTGTSPDTIA) show a composition bias toward polar residues. A compositionally biased stretch (low complexity) spans 520-544 (SFQTDSTSFGFGSGSPSSGAVQSSG). The span at 545–558 (VTNSTPNTGDVNTQ) shows a compositional bias: polar residues. Composition is skewed to low complexity over residues 559–590 (SNTA…TTTG) and 597–625 (NNNN…NTNN). N-linked (GlcNAc...) asparagine glycosylation is found at Asn-577, Asn-621, Asn-624, and Asn-663. Over residues 665–679 (SSSPSSSSSSSSSSS) the composition is skewed to low complexity. Asn-690 carries an N-linked (GlcNAc...) asparagine glycan. Residue Asn-690 is the site of GPI-anchor amidated asparagine attachment. A propeptide spans 691 to 714 (GSSKLSIGMTFMISGFATMFALFM) (removed in mature form).

Belongs to the HYR1/IFF family. The GPI-anchor is attached to the protein in the endoplasmic reticulum and serves to target the protein to the cell surface. There, the glucosamine-inositol phospholipid moiety is cleaved off and the GPI-modified mannoprotein is covalently attached via its lipidless GPI glycan remnant to the 1,6-beta-glucan of the outer cell wall layer.

The protein resides in the secreted. The protein localises to the cell wall. It localises to the membrane. Functionally, GPI-anchored cell wall protein involved in cell wall organization, hyphal growth, as well as in host-fungal interaction and virulence. This chain is Cell wall protein IFF7 (IFF8), found in Candida albicans (strain SC5314 / ATCC MYA-2876) (Yeast).